We begin with the raw amino-acid sequence, 658 residues long: UvrABC system protein B (658 aa).

The region spanning 25–182 (DSIRSGNKFN…LKLVDMGYKR (158 aa)) is the Helicase ATP-binding domain. Residue 38 to 45 (GVTGSGKT) coordinates ATP. Residues 91–114 (YYDYYQPEAYIPRQDLFIEKDSSI) carry the Beta-hairpin motif. Residues 433–596 (QVEVLFDRAK…TPRSASRNLE (164 aa)) form the Helicase C-terminal domain. In terms of domain architecture, UVR spans 623–658 (AKIVKELRKQMLEAAKNLEFEKAAALRDEIAKLREL).

The protein belongs to the UvrB family. As to quaternary structure, forms a heterotetramer with UvrA during the search for lesions. Interacts with UvrC in an incision complex.

It is found in the cytoplasm. Its function is as follows. The UvrABC repair system catalyzes the recognition and processing of DNA lesions. A damage recognition complex composed of 2 UvrA and 2 UvrB subunits scans DNA for abnormalities. Upon binding of the UvrA(2)B(2) complex to a putative damaged site, the DNA wraps around one UvrB monomer. DNA wrap is dependent on ATP binding by UvrB and probably causes local melting of the DNA helix, facilitating insertion of UvrB beta-hairpin between the DNA strands. Then UvrB probes one DNA strand for the presence of a lesion. If a lesion is found the UvrA subunits dissociate and the UvrB-DNA preincision complex is formed. This complex is subsequently bound by UvrC and the second UvrB is released. If no lesion is found, the DNA wraps around the other UvrB subunit that will check the other stand for damage. The sequence is that of UvrABC system protein B from Campylobacter fetus subsp. fetus (strain 82-40).